The chain runs to 270 residues: Probable inositol 1-monophosphatase ImpA (270 aa).

Mg(2+) contacts are provided by E69, D85, I87, and D88. E69 is a binding site for substrate. Residues 87–90, R187, and D216 each bind substrate; that span reads IDGT. D216 is a binding site for Mg(2+).

The protein belongs to the inositol monophosphatase superfamily. Requires Mg(2+) as cofactor.

It carries out the reaction a myo-inositol phosphate + H2O = myo-inositol + phosphate. It functions in the pathway polyol metabolism; myo-inositol biosynthesis; myo-inositol from D-glucose 6-phosphate: step 2/2. Its function is as follows. Catalyzes the dephosphorylation of inositol 1-phosphate (I-1-P) to yield free myo-inositol, a key metabolite in mycobacteria. The sequence is that of Probable inositol 1-monophosphatase ImpA (impA) from Mycobacterium tuberculosis (strain ATCC 25618 / H37Rv).